The following is a 239-amino-acid chain: 7-cyano-7-deazaguanine synthase (239 aa).

Residue 12–22 coordinates ATP; the sequence is FSGGQDSATCL. Zn(2+)-binding residues include C200, C215, C218, and C221.

It belongs to the QueC family. Zn(2+) serves as cofactor.

The enzyme catalyses 7-carboxy-7-deazaguanine + NH4(+) + ATP = 7-cyano-7-deazaguanine + ADP + phosphate + H2O + H(+). The protein operates within purine metabolism; 7-cyano-7-deazaguanine biosynthesis. In terms of biological role, catalyzes the ATP-dependent conversion of 7-carboxy-7-deazaguanine (CDG) to 7-cyano-7-deazaguanine (preQ(0)). This chain is 7-cyano-7-deazaguanine synthase, found in Hyphomonas neptunium (strain ATCC 15444).